We begin with the raw amino-acid sequence, 109 residues long: Prothymosin alpha (109 aa).

A disordered region spans residues 1–109; that stretch reads MSDTSVDASV…AKKQKTDDDD (109 aa). A compositionally biased stretch (basic and acidic residues) spans 9–35; the sequence is SVEKTTKDLKSKDKELVEETENGKDKP. The span at 41–81 shows a compositional bias: acidic residues; sequence ENEENGEDGADNEEEEEVDEEDEEDEGEGDDDEGDEDDEAD. Residues 99–109 are compositionally biased toward basic and acidic residues; the sequence is DAKKQKTDDDD.

It belongs to the pro/parathymosin family. Highly expressed in the testis.

It localises to the nucleus. In terms of biological role, may have role in testicular activity. The polypeptide is Prothymosin alpha (Pelophylax lessonae (Pool frog)).